The sequence spans 262 residues: Indole-3-glycerol phosphate synthase (262 aa).

Belongs to the TrpC family.

It carries out the reaction 1-(2-carboxyphenylamino)-1-deoxy-D-ribulose 5-phosphate + H(+) = (1S,2R)-1-C-(indol-3-yl)glycerol 3-phosphate + CO2 + H2O. It functions in the pathway amino-acid biosynthesis; L-tryptophan biosynthesis; L-tryptophan from chorismate: step 4/5. This chain is Indole-3-glycerol phosphate synthase, found in Staphylococcus epidermidis (strain ATCC 35984 / DSM 28319 / BCRC 17069 / CCUG 31568 / BM 3577 / RP62A).